A 66-amino-acid chain; its full sequence is Large ribosomal subunit protein bL35 (66 aa).

Belongs to the bacterial ribosomal protein bL35 family.

The protein is Large ribosomal subunit protein bL35 of Phenylobacterium zucineum (strain HLK1).